The primary structure comprises 221 residues: MSDVFDGYERQYCELSASLSKKCSSAISLDGEQKKQKLSEIKSGLENAEVLIRKMDLEARTLPPNLKSSLLVKLREFKSDLNNFKTEVKRITSGQLNAAARDELLEAGMADTKTASADQRARLMMSTERLGRTTDRVKDSRRTMMETEEIGVSILQDLHGQRQSLLRAHETLHGVDDNIGKSKKILTDMTRRMNKNKWTIGAIIIALIAAIFIILYFKLTK.

S2 carries the N-acetylserine modification. Over 2–198 (SDVFDGYERQ…MTRRMNKNKW (197 aa)) the chain is Cytoplasmic. Residues 32 to 93 (EQKKQKLSEI…FKTEVKRITS (62 aa)) adopt a coiled-coil conformation. Residues 199-219 (TIGAIIIALIAAIFIILYFKL) form a helical; Anchor for type IV membrane protein membrane-spanning segment. Over 220–221 (TK) the chain is Vesicular.

It belongs to the VTI1 family. Forms SNARE complexes with the t-SNAREs SYP51 and either SYP21 or SYP22 in the PVC, and with a much lower affinity with SYP61 in the TGN. Does not interact with SYP41, SYP42 or VPS45. Binds to EPSIN1. Interacts with SCYL2B. In terms of tissue distribution, expressed in roots, stems, flowers and leaves.

Its subcellular location is the golgi apparatus. It is found in the trans-Golgi network membrane. It localises to the prevacuolar compartment membrane. The protein localises to the vacuole membrane. Functions as a v-SNARE responsible for targeting AtELP-containing vesicles from the trans-Golgi network (TGN) to the prevacuolar compartment (PVC) and mediates liposome fusion. May be also involved in retrograde traffic to the cis-Golgi. Promotes the formation of vacuolar membrane 'bulbs'. Necessary to deliver proteins to the lytic vacuole, but seems not involved in storage proteins transport. Required for amyloplast sedimentation in the endodermis during shoot gravitropism, which are thus acting as statoliths. Expression in the endodermis is essential for the shoot gravitropic response, whereas expression in other tissues may be responsible for the correct stem and leaf shape. The chain is Vesicle transport v-SNARE 11 from Arabidopsis thaliana (Mouse-ear cress).